The sequence spans 348 residues: Chaperone protein DnaJ (348 aa).

Residues 3 to 65 (DLYGILGVDH…EQRQRYDRHV (63 aa)) form the J domain. The CR-type zinc-finger motif lies at 109–191 (GGSQVVKIDS…CYGNGSRSAP (83 aa)). Cysteine 122, cysteine 125, cysteine 139, cysteine 142, cysteine 165, cysteine 168, cysteine 179, and cysteine 182 together coordinate Zn(2+). 4 CXXCXGXG motif repeats span residues 122–129 (CDVCNGTR), 139–146 (CFDCNGSG), 165–172 (CSKCRGNG), and 179–186 (CRRCYGNG).

The protein belongs to the DnaJ family. As to quaternary structure, homodimer. Requires Zn(2+) as cofactor.

It is found in the cytoplasm. Its function is as follows. Participates actively in the response to hyperosmotic and heat shock by preventing the aggregation of stress-denatured proteins and by disaggregating proteins, also in an autonomous, DnaK-independent fashion. Unfolded proteins bind initially to DnaJ; upon interaction with the DnaJ-bound protein, DnaK hydrolyzes its bound ATP, resulting in the formation of a stable complex. GrpE releases ADP from DnaK; ATP binding to DnaK triggers the release of the substrate protein, thus completing the reaction cycle. Several rounds of ATP-dependent interactions between DnaJ, DnaK and GrpE are required for fully efficient folding. Also involved, together with DnaK and GrpE, in the DNA replication of plasmids through activation of initiation proteins. In Tropheryma whipplei (strain Twist) (Whipple's bacillus), this protein is Chaperone protein DnaJ.